The following is a 156-amino-acid chain: Glutamate-rich protein 2 (156 aa).

Disordered stretches follow at residues 29 to 66 and 116 to 156; these read LQDI…TQAP and EKTQ…EDGS. Composition is skewed to acidic residues over residues 39–56 and 140–156; these read SAED…DDED and SDEE…EDGS.

The polypeptide is Glutamate-rich protein 2 (ERICH2) (Homo sapiens (Human)).